Consider the following 142-residue polypeptide: 3-hydroxyacyl-[acyl-carrier-protein] dehydratase FabZ (142 aa).

Residue H48 is part of the active site.

The protein belongs to the thioester dehydratase family. FabZ subfamily.

It is found in the cytoplasm. The catalysed reaction is a (3R)-hydroxyacyl-[ACP] = a (2E)-enoyl-[ACP] + H2O. Its function is as follows. Involved in unsaturated fatty acids biosynthesis. Catalyzes the dehydration of short chain beta-hydroxyacyl-ACPs and long chain saturated and unsaturated beta-hydroxyacyl-ACPs. In Desulforamulus reducens (strain ATCC BAA-1160 / DSM 100696 / MI-1) (Desulfotomaculum reducens), this protein is 3-hydroxyacyl-[acyl-carrier-protein] dehydratase FabZ.